Here is a 97-residue protein sequence, read N- to C-terminus: U-reduvitoxin-Pr11a (97 aa).

Positions 1–20 are cleaved as a signal peptide; it reads MKTALFLVFALAFIAVEGKM. Pacifastin domains lie at 22–59 and 62–97; these read RACS…CPPR and EKSC…KLCL. 3 cysteine pairs are disulfide-bonded: cysteine 24–cysteine 42, cysteine 37–cysteine 56, and cysteine 40–cysteine 51. The interval 57–59 is pro-Pro-Arg motif necessary for proteolytic processing; that stretch reads PPR. Disulfide bonds link cysteine 65/cysteine 82, cysteine 77/cysteine 96, and cysteine 80/cysteine 91.

The protein belongs to the protease inhibitor I19 family. As to expression, expressed by the venom gland.

The protein localises to the secreted. Functionally, inhibits trypsin activity and prophenoloxidase (PPO) activation, an enzyme essential for both clotting and insect innate immune responses. It does not inhibit activity of chymotrypsin and protease K, and has no effect on phenoloxidase (PO) activity. This Platymeris rhadamanthus (Red spot assassin bug) protein is U-reduvitoxin-Pr11a.